The following is a 438-amino-acid chain: UDP-N-acetylmuramoylalanine--D-glutamate ligase (438 aa).

112 to 118 (GSNGKST) lines the ATP pocket.

The protein belongs to the MurCDEF family.

Its subcellular location is the cytoplasm. The enzyme catalyses UDP-N-acetyl-alpha-D-muramoyl-L-alanine + D-glutamate + ATP = UDP-N-acetyl-alpha-D-muramoyl-L-alanyl-D-glutamate + ADP + phosphate + H(+). It participates in cell wall biogenesis; peptidoglycan biosynthesis. Cell wall formation. Catalyzes the addition of glutamate to the nucleotide precursor UDP-N-acetylmuramoyl-L-alanine (UMA). This chain is UDP-N-acetylmuramoylalanine--D-glutamate ligase, found in Salmonella typhimurium (strain LT2 / SGSC1412 / ATCC 700720).